Here is a 125-residue protein sequence, read N- to C-terminus: MORF4 family-associated protein 1 (125 aa).

The disordered stretch occupies residues 76–99 (ESALNHLQGAGGAEPRGPRAEKAD). The stretch at 94-124 (RAEKADEKAQEMAKMAEMLVQLVRRIEKSES) forms a coiled coil.

It belongs to the MORF4 family-associated protein family. Found in a complex composed of MORF4L1, MRFAP1 and RB1. Interacts via its N-terminus with MORF4L1. Interacts with CSTB and MORF4L2. In terms of tissue distribution, widely expressed in all tissues examined and as early as 7 days during embryonic development.

The protein localises to the nucleus. It is found in the cytoplasm. It localises to the perinuclear region. The chain is MORF4 family-associated protein 1 from Mus musculus (Mouse).